The primary structure comprises 430 residues: UDP-N-acetylglucosamine 1-carboxyvinyltransferase (430 aa).

22 to 23 (KN) serves as a coordination point for phosphoenolpyruvate. Arg-102 is a UDP-N-acetyl-alpha-D-glucosamine binding site. Cys-126 (proton donor) is an active-site residue. Residue Cys-126 is modified to 2-(S-cysteinyl)pyruvic acid O-phosphothioketal. UDP-N-acetyl-alpha-D-glucosamine-binding positions include 131 to 135 (RPVDL), 172 to 175 (KVSV), Asp-317, and Ile-339.

Belongs to the EPSP synthase family. MurA subfamily.

Its subcellular location is the cytoplasm. It carries out the reaction phosphoenolpyruvate + UDP-N-acetyl-alpha-D-glucosamine = UDP-N-acetyl-3-O-(1-carboxyvinyl)-alpha-D-glucosamine + phosphate. The protein operates within cell wall biogenesis; peptidoglycan biosynthesis. Functionally, cell wall formation. Adds enolpyruvyl to UDP-N-acetylglucosamine. The chain is UDP-N-acetylglucosamine 1-carboxyvinyltransferase from Sinorhizobium medicae (strain WSM419) (Ensifer medicae).